The primary structure comprises 372 residues: Ribosomal RNA small subunit methyltransferase H (372 aa).

Residues 44–46 (GGH), Asp63, Leu97, Asp111, and Gln118 contribute to the S-adenosyl-L-methionine site. Residues 315-334 (RAAERLDPTAEQRRRTDRER) are compositionally biased toward basic and acidic residues. Positions 315–372 (RAAERLDPTAEQRRRTDRERYRRRVRAMHQPGTGSAVRRPTPGDDGTGTDEEGEGHDS) are disordered. Over residues 361 to 372 (TGTDEEGEGHDS) the composition is skewed to acidic residues.

This sequence belongs to the methyltransferase superfamily. RsmH family.

It is found in the cytoplasm. The catalysed reaction is cytidine(1402) in 16S rRNA + S-adenosyl-L-methionine = N(4)-methylcytidine(1402) in 16S rRNA + S-adenosyl-L-homocysteine + H(+). Functionally, specifically methylates the N4 position of cytidine in position 1402 (C1402) of 16S rRNA. This chain is Ribosomal RNA small subunit methyltransferase H, found in Salinispora arenicola (strain CNS-205).